Reading from the N-terminus, the 581-residue chain is Solute carrier family 15 member 3 (581 aa).

A compositionally biased stretch (basic and acidic residues) spans 1 to 14 (MPAPRAREQPRVPG). Residues 1–26 (MPAPRAREQPRVPGERQPLLPRGARG) are disordered. The chain crosses the membrane as a helical span at residues 38–58 (VLLVEMLERAAFFGVTANLVL). N-linked (GlcNAc...) asparagine glycans are attached at residues N61 and N66. 3 helical membrane-spanning segments follow: residues 76–96 (ALVF…LADV), 103–123 (AVAL…ATAF), and 155–175 (PYCA…ASSV). N178 carries an N-linked (GlcNAc...) asparagine glycan. The chain crosses the membrane as a helical span at residues 200-220 (NWFYWSINLGAVLSLLVVAFI). N-linked (GlcNAc...) asparagine glycosylation occurs at N223. Helical transmembrane passes span 232–252 (IPVG…PVFI) and 310–330 (FQVL…WMVY). N356 is a glycosylation site (N-linked (GlcNAc...) asparagine). 2 helical membrane passes run 369–389 (TIPE…LVPL) and 411–431 (MALG…LEME). N439 carries an N-linked (GlcNAc...) asparagine glycan. The next 3 membrane-spanning stretches (helical) occupy residues 458–478 (IWWQ…ASIP), 497–517 (GIFF…VALL), and 540–560 (LYFF…VWIA).

It belongs to the major facilitator superfamily. Proton-dependent oligopeptide transporter (POT/PTR) (TC 2.A.17) family.

The protein resides in the lysosome membrane. The protein localises to the endosome membrane. It carries out the reaction glycylglycylglycine(out) + n H(+)(out) = glycylglycylglycine(in) + n H(+)(in). It catalyses the reaction carnosine(out) + n H(+)(out) = carnosine(in) + n H(+)(in). The enzyme catalyses L-histidine(out) + n H(+)(out) = L-histidine(in) + n H(+)(in). The catalysed reaction is N-acetyl-D-muramoyl-L-alanyl-D-isoglutamine(out) + n H(+)(out) = N-acetyl-D-muramoyl-L-alanyl-D-isoglutamine(in) + n H(+)(in). Functionally, proton-coupled amino-acid transporter that transports free histidine and certain di- and tripeptides, and is involved in innate immune response. Also able to transport carnosine. Involved in the detection of microbial pathogens by toll-like receptors (TLRs) and NOD-like receptors (NLRs), probably by mediating transport of bacterial peptidoglycans across the endolysosomal membrane: catalyzes the transport of certain bacterial peptidoglycans, such as muramyl dipeptide (MDP), the NOD2 ligand. This Homo sapiens (Human) protein is Solute carrier family 15 member 3.